Reading from the N-terminus, the 696-residue chain is Chitin synthase regulator SKT5 (696 aa).

2 disordered regions span residues 37-67 (GQDF…SANQ) and 90-145 (QEED…IKKR). A compositionally biased stretch (basic and acidic residues) spans 41–53 (SDNKENRENRDNE). The span at 104–126 (LNNSNNTSLSSLGSTPTNSPSPG) shows a compositional bias: low complexity. Polar residues predominate over residues 129–139 (RQTNSSTSLTK). At Ser-148 the chain carries Phosphoserine. 7 Sel1-like repeats span residues 271–306 (SDAQ…KHGH), 307–342 (IESA…SRNH), 343–382 (PSAM…ARAN), 386–423 (AAAP…SLGH), 424–460 (VPSA…LKGD), 461–498 (SVAM…NAGL), and 499–534 (PKAQ…GNED). Residues Ser-561 and Ser-563 each carry the phosphoserine modification. Thr-564 is subject to Phosphothreonine. Polar residues-rich tracts occupy residues 576–593 (SNVG…TFFT), 605–634 (LQIN…SSAK), and 651–661 (VSLSNMGSSNM). The interval 576-696 (SNVGSNSRVS…GKKKKDCVIM (121 aa)) is disordered. Basic and acidic residues predominate over residues 662–675 (IRKDFPAVKTESKK). Basic residues predominate over residues 680 to 696 (KNKKDKQGKKKKDCVIM). At Cys-693 the chain carries Cysteine methyl ester. Residue Cys-693 is the site of S-farnesyl cysteine attachment. A propeptide spans 694–696 (VIM) (removed in mature form).

This sequence belongs to the SKT5 family. In terms of assembly, may interact with CHS3 and seems to be an adapter (along with BNI4) to link CHS3 to septins. Farnesylation is required for chitin synthase CHS3 activity but is not required for SKT5 membrane association.

It localises to the cell membrane. Functionally, activator of the chitin synthase CHS3 which polymerizes chitin, a structural polymer of the fungal cell wall. This Saccharomyces cerevisiae (strain ATCC 204508 / S288c) (Baker's yeast) protein is Chitin synthase regulator SKT5.